Here is a 438-residue protein sequence, read N- to C-terminus: Protein DAY-LENGTH-DEPENDENT DELAYED-GREENING 1, chloroplastic (438 aa).

Residues 1–54 (MSLMSSSMVLCHCLSFSSQNPDPESSSSSLLRYKPCDSISLWGKRRKKLWRFVP) constitute a chloroplast transit peptide. Helical transmembrane passes span 216–236 (FLAV…DYLL), 314–334 (AFAN…LLYA), 359–379 (AFLI…SGWE), and 398–418 (ITIF…LWLF).

This sequence belongs to the CemA family.

The protein localises to the plastid. It is found in the chloroplast envelope. Its subcellular location is the chloroplast membrane. It catalyses the reaction K(+)(in) + H(+)(out) = K(+)(out) + H(+)(in). The catalysed reaction is Ca(2+)(in) + H(+)(out) = Ca(2+)(out) + H(+)(in). In terms of biological role, promotes K(+)/H(+) antiport activity supporting K(+) efflux to control H(+) homeostasis in chloroplasts. Also able to ensure Ca(2+)/H(+) antiport activity in vitro. Essential for chloroplast pH regulation and optimization of non-photochemical quenching (NPQ), a regulatory mechanism that dissipates excess light energy; acts downstream of PSBS but independently from PGR5 and FLAP1. This is Protein DAY-LENGTH-DEPENDENT DELAYED-GREENING 1, chloroplastic from Arabidopsis thaliana (Mouse-ear cress).